The following is an 83-amino-acid chain: Conotoxin LiCr95 (83 aa).

A signal peptide spans 1–22 (MKLTCALIVAMLFLTACQLTTT). A propeptide spanning residues 23–50 (DDSRGRQKYPTERLRVKMRNPKLSKLTK) is cleaved from the precursor. 3 disulfide bridges follow: Cys52–Cys67, Cys59–Cys71, and Cys66–Cys80.

This sequence belongs to the conotoxin O1 superfamily. In terms of tissue distribution, expressed by the venom duct.

The protein resides in the secreted. The polypeptide is Conotoxin LiCr95 (Conus lividus (Livid cone)).